Here is a 446-residue protein sequence, read N- to C-terminus: Phosphoglucosamine mutase (446 aa).

The Phosphoserine intermediate role is filled by S100. The Mg(2+) site is built by S100, D239, D241, and D243. S100 carries the phosphoserine modification.

It belongs to the phosphohexose mutase family. Requires Mg(2+) as cofactor. Activated by phosphorylation.

The catalysed reaction is alpha-D-glucosamine 1-phosphate = D-glucosamine 6-phosphate. Catalyzes the conversion of glucosamine-6-phosphate to glucosamine-1-phosphate. The sequence is that of Phosphoglucosamine mutase from Oceanobacillus iheyensis (strain DSM 14371 / CIP 107618 / JCM 11309 / KCTC 3954 / HTE831).